We begin with the raw amino-acid sequence, 189 residues long: Potassium-transporting ATPase KdpC subunit (189 aa).

A helical membrane pass occupies residues proline 6–valine 26.

This sequence belongs to the KdpC family. In terms of assembly, the system is composed of three essential subunits: KdpA, KdpB and KdpC.

It localises to the cell inner membrane. Functionally, part of the high-affinity ATP-driven potassium transport (or Kdp) system, which catalyzes the hydrolysis of ATP coupled with the electrogenic transport of potassium into the cytoplasm. This subunit acts as a catalytic chaperone that increases the ATP-binding affinity of the ATP-hydrolyzing subunit KdpB by the formation of a transient KdpB/KdpC/ATP ternary complex. The sequence is that of Potassium-transporting ATPase KdpC subunit from Geobacter sulfurreducens (strain ATCC 51573 / DSM 12127 / PCA).